The following is a 228-amino-acid chain: MKVAYHGHSVVTVDTGDHQLIFDPFITGNSLTDLKPEDVKADVILLTHGHNDHVGDTIEIAKRNNSLVVAPNELAVYLGWKGLNVHPMHIGGSHQFDFGKVKLTQAFHGSAYTEEDSQKIVYTGMPAGILLTVEGRTIFHAGDTGLFSDMKLIGELNHIDLAFLPIGDNFTMGPEDAKLAAEWLRAKQVVPVHYSTFPVIEQDPHAFADSLPGGVGKVLEVGESIEFK.

The protein belongs to the UPF0173 family.

The polypeptide is UPF0173 metal-dependent hydrolase BLi03080/BL00413 (Bacillus licheniformis (strain ATCC 14580 / DSM 13 / JCM 2505 / CCUG 7422 / NBRC 12200 / NCIMB 9375 / NCTC 10341 / NRRL NRS-1264 / Gibson 46)).